The following is a 583-amino-acid chain: ATP-dependent lipid A-core flippase (583 aa).

Helical transmembrane passes span 32-52 (VAFL…TGFL), 71-91 (LHLL…AGFI), 115-135 (LMSL…TSKL), 160-180 (ILGM…IFAV), 259-279 (SMVV…YAVG), and 286-306 (FAAF…LTSL). In terms of domain architecture, ABC transmembrane type-1 spans 34-312 (FLISIIALVT…LTSLNEELQV (279 aa)). The ABC transporter domain maps to 344–580 (IVFENVTLQY…DGHYAKLYRK (237 aa)). Residue 378 to 385 (GRSGGGKT) coordinates ATP.

The protein belongs to the ABC transporter superfamily. Lipid exporter (TC 3.A.1.106) family. As to quaternary structure, homodimer.

It is found in the cell inner membrane. It carries out the reaction ATP + H2O + lipid A-core oligosaccharideSide 1 = ADP + phosphate + lipid A-core oligosaccharideSide 2.. In terms of biological role, involved in lipopolysaccharide (LPS) biosynthesis. Translocates lipid A-core from the inner to the outer leaflet of the inner membrane. Transmembrane domains (TMD) form a pore in the inner membrane and the ATP-binding domain (NBD) is responsible for energy generation. The sequence is that of ATP-dependent lipid A-core flippase from Methylobacillus flagellatus (strain ATCC 51484 / DSM 6875 / VKM B-1610 / KT).